The following is a 404-amino-acid chain: Putative arginine deiminase (404 aa).

Cysteine 394 acts as the Amidino-cysteine intermediate in catalysis.

This sequence belongs to the arginine deiminase family.

The protein localises to the cytoplasm. It carries out the reaction L-arginine + H2O = L-citrulline + NH4(+). Its pathway is amino-acid degradation; L-arginine degradation via ADI pathway; carbamoyl phosphate from L-arginine: step 1/2. The polypeptide is Putative arginine deiminase (arcA) (Mycoplasma pneumoniae (strain ATCC 29342 / M129 / Subtype 1) (Mycoplasmoides pneumoniae)).